The following is a 263-amino-acid chain: 4-hydroxy-tetrahydrodipicolinate reductase (263 aa).

Residues 7-12 and aspartate 33 each bind NAD(+); that span reads GASGRM. An NADP(+)-binding site is contributed by arginine 34. Residues 96–98 and 120–123 each bind NAD(+); these read GTT and APNM. The active-site Proton donor/acceptor is the histidine 153. (S)-2,3,4,5-tetrahydrodipicolinate is bound at residue histidine 154. The active-site Proton donor is the lysine 157. Residue 163–164 coordinates (S)-2,3,4,5-tetrahydrodipicolinate; that stretch reads GT.

It belongs to the DapB family.

The protein localises to the cytoplasm. The enzyme catalyses (S)-2,3,4,5-tetrahydrodipicolinate + NAD(+) + H2O = (2S,4S)-4-hydroxy-2,3,4,5-tetrahydrodipicolinate + NADH + H(+). It catalyses the reaction (S)-2,3,4,5-tetrahydrodipicolinate + NADP(+) + H2O = (2S,4S)-4-hydroxy-2,3,4,5-tetrahydrodipicolinate + NADPH + H(+). The protein operates within amino-acid biosynthesis; L-lysine biosynthesis via DAP pathway; (S)-tetrahydrodipicolinate from L-aspartate: step 4/4. Functionally, catalyzes the conversion of 4-hydroxy-tetrahydrodipicolinate (HTPA) to tetrahydrodipicolinate. The protein is 4-hydroxy-tetrahydrodipicolinate reductase of Ralstonia nicotianae (strain ATCC BAA-1114 / GMI1000) (Ralstonia solanacearum).